The sequence spans 338 residues: Holliday junction branch migration complex subunit RuvB (338 aa).

The large ATPase domain (RuvB-L) stretch occupies residues 1–180; it reads MTRLVTPDIT…FGVISRLEFY (180 aa). ATP is bound by residues L19, R20, G61, K64, T65, T66, 127–129, R170, Y180, and R217; that span reads EDY. A Mg(2+)-binding site is contributed by T65. The interval 181 to 251 is small ATPAse domain (RuvB-S); that stretch reads TDDELTTIVT…VVDESLKLLE (71 aa). A head domain (RuvB-H) region spans residues 254-338; the sequence is EKGFDHMDRT…PPSSSQGNLF (85 aa). R290, R309, and R314 together coordinate DNA.

Belongs to the RuvB family. In terms of assembly, homohexamer. Forms an RuvA(8)-RuvB(12)-Holliday junction (HJ) complex. HJ DNA is sandwiched between 2 RuvA tetramers; dsDNA enters through RuvA and exits via RuvB. An RuvB hexamer assembles on each DNA strand where it exits the tetramer. Each RuvB hexamer is contacted by two RuvA subunits (via domain III) on 2 adjacent RuvB subunits; this complex drives branch migration. In the full resolvosome a probable DNA-RuvA(4)-RuvB(12)-RuvC(2) complex forms which resolves the HJ.

The protein localises to the cytoplasm. It carries out the reaction ATP + H2O = ADP + phosphate + H(+). The RuvA-RuvB-RuvC complex processes Holliday junction (HJ) DNA during genetic recombination and DNA repair, while the RuvA-RuvB complex plays an important role in the rescue of blocked DNA replication forks via replication fork reversal (RFR). RuvA specifically binds to HJ cruciform DNA, conferring on it an open structure. The RuvB hexamer acts as an ATP-dependent pump, pulling dsDNA into and through the RuvAB complex. RuvB forms 2 homohexamers on either side of HJ DNA bound by 1 or 2 RuvA tetramers; 4 subunits per hexamer contact DNA at a time. Coordinated motions by a converter formed by DNA-disengaged RuvB subunits stimulates ATP hydrolysis and nucleotide exchange. Immobilization of the converter enables RuvB to convert the ATP-contained energy into a lever motion, pulling 2 nucleotides of DNA out of the RuvA tetramer per ATP hydrolyzed, thus driving DNA branch migration. The RuvB motors rotate together with the DNA substrate, which together with the progressing nucleotide cycle form the mechanistic basis for DNA recombination by continuous HJ branch migration. Branch migration allows RuvC to scan DNA until it finds its consensus sequence, where it cleaves and resolves cruciform DNA. The protein is Holliday junction branch migration complex subunit RuvB of Geobacter metallireducens (strain ATCC 53774 / DSM 7210 / GS-15).